The following is a 98-amino-acid chain: Ferredoxin-like protein (98 aa).

Residues 57 to 87 form the 4Fe-4S ferredoxin-type domain; that stretch reads GQVEVTADGCMECGTCRVLCEANGDVEWSYP.

The protein to ferredoxins from P.putida and C.tartarivorum, ferredoxin I from A.vinelandii, ferredoxin II from D.desulfuricans.

Functionally, could be a 3Fe-4S cluster-containing protein. The sequence is that of Ferredoxin-like protein (fixX) from Rhizobium meliloti (strain 1021) (Ensifer meliloti).